The sequence spans 34 residues: Photosystem II reaction center protein M (34 aa).

Residues 6 to 26 (LGAIATALFVFIPCVFLILLY) traverse the membrane as a helical segment.

The protein belongs to the PsbM family. PSII is composed of 1 copy each of membrane proteins PsbA, PsbB, PsbC, PsbD, PsbE, PsbF, PsbH, PsbI, PsbJ, PsbK, PsbL, PsbM, PsbT, PsbX, PsbY, PsbZ, Psb30/Ycf12, peripheral proteins PsbO, CyanoQ (PsbQ), PsbU, PsbV and a large number of cofactors. It forms dimeric complexes.

Its subcellular location is the cellular thylakoid membrane. One of the components of the core complex of photosystem II (PSII). PSII is a light-driven water:plastoquinone oxidoreductase that uses light energy to abstract electrons from H(2)O, generating O(2) and a proton gradient subsequently used for ATP formation. It consists of a core antenna complex that captures photons, and an electron transfer chain that converts photonic excitation into a charge separation. This subunit is found at the monomer-monomer interface. The polypeptide is Photosystem II reaction center protein M (Acaryochloris marina (strain MBIC 11017)).